A 643-amino-acid polypeptide reads, in one-letter code: Arginine--tRNA ligase, mitochondrial (643 aa).

A 'HIGH' region motif is present at residues 188-198; the sequence is PNIAKPFHAGH.

Belongs to the class-I aminoacyl-tRNA synthetase family.

It is found in the mitochondrion matrix. The enzyme catalyses tRNA(Arg) + L-arginine + ATP = L-arginyl-tRNA(Arg) + AMP + diphosphate. This is Arginine--tRNA ligase, mitochondrial (MSR1) from Saccharomyces cerevisiae (strain ATCC 204508 / S288c) (Baker's yeast).